The sequence spans 953 residues: Isoleucine--tRNA ligase (953 aa).

Positions 57–67 (PYANGDIHIGH) match the 'HIGH' region motif. E582 is a binding site for L-isoleucyl-5'-AMP. The 'KMSKS' region signature appears at 623–627 (KMSKS). K626 is an ATP binding site. Residues C916, C919, C936, and C939 each contribute to the Zn(2+) site.

Belongs to the class-I aminoacyl-tRNA synthetase family. IleS type 1 subfamily. As to quaternary structure, monomer. It depends on Zn(2+) as a cofactor.

Its subcellular location is the cytoplasm. The catalysed reaction is tRNA(Ile) + L-isoleucine + ATP = L-isoleucyl-tRNA(Ile) + AMP + diphosphate. Catalyzes the attachment of isoleucine to tRNA(Ile). As IleRS can inadvertently accommodate and process structurally similar amino acids such as valine, to avoid such errors it has two additional distinct tRNA(Ile)-dependent editing activities. One activity is designated as 'pretransfer' editing and involves the hydrolysis of activated Val-AMP. The other activity is designated 'posttransfer' editing and involves deacylation of mischarged Val-tRNA(Ile). This Bordetella avium (strain 197N) protein is Isoleucine--tRNA ligase.